The sequence spans 231 residues: tRNA (guanine-N(7)-)-methyltransferase (231 aa).

S-adenosyl-L-methionine-binding residues include glutamate 62, glutamate 87, aspartate 114, and aspartate 136. Residue aspartate 136 is part of the active site. Residues lysine 140, aspartate 172, and 210 to 213 (TRYE) contribute to the substrate site.

It belongs to the class I-like SAM-binding methyltransferase superfamily. TrmB family.

It catalyses the reaction guanosine(46) in tRNA + S-adenosyl-L-methionine = N(7)-methylguanosine(46) in tRNA + S-adenosyl-L-homocysteine. Its pathway is tRNA modification; N(7)-methylguanine-tRNA biosynthesis. Its function is as follows. Catalyzes the formation of N(7)-methylguanine at position 46 (m7G46) in tRNA. This is tRNA (guanine-N(7)-)-methyltransferase from Zymomonas mobilis subsp. mobilis (strain ATCC 31821 / ZM4 / CP4).